The chain runs to 715 residues: 1,4-alpha-glucan branching enzyme GlgB (715 aa).

Residue D399 is the Nucleophile of the active site. Catalysis depends on E452, which acts as the Proton donor.

This sequence belongs to the glycosyl hydrolase 13 family. GlgB subfamily. Monomer.

The catalysed reaction is Transfers a segment of a (1-&gt;4)-alpha-D-glucan chain to a primary hydroxy group in a similar glucan chain.. The protein operates within glycan biosynthesis; glycogen biosynthesis. Its function is as follows. Catalyzes the formation of the alpha-1,6-glucosidic linkages in glycogen by scission of a 1,4-alpha-linked oligosaccharide from growing alpha-1,4-glucan chains and the subsequent attachment of the oligosaccharide to the alpha-1,6 position. The protein is 1,4-alpha-glucan branching enzyme GlgB of Rhodopseudomonas palustris (strain BisA53).